Consider the following 335-residue polypeptide: Ubiquinone biosynthesis protein COQ4, mitochondrial (335 aa).

The N-terminal 10 residues, 1 to 10, are a transit peptide targeting the mitochondrion; that stretch reads MLRLSLLRST. His210, Asp211, His214, and Glu226 together coordinate Zn(2+).

The protein belongs to the COQ4 family. Component of a multi-subunit COQ enzyme complex, composed of at least COQ3, COQ4, COQ5, COQ6, COQ7 and COQ9. Interacts with COQ3. It depends on Zn(2+) as a cofactor.

Its subcellular location is the mitochondrion inner membrane. The enzyme catalyses 4-hydroxy-3-methoxy-5-(all-trans-hexaprenyl)benzoate + H(+) = 2-methoxy-6-(all-trans-hexaprenyl)phenol + CO2. The protein operates within cofactor biosynthesis; ubiquinone biosynthesis. Functionally, lyase that catalyzes the C1-decarboxylation of 4-hydroxy-3-methoxy-5-(all-trans-hexaprenyl)benzoic acid into 2-methoxy-6-(all-trans-hexaprenyl)phenol during ubiquinone biosynthesis. May play a role in organizing a multi-subunit COQ enzyme complex required for coenzyme Q biosynthesis. Required for steady-state levels of COQ3, COQ4, COQ6, COQ7 and COQ9 polypeptides. The protein is Ubiquinone biosynthesis protein COQ4, mitochondrial of Saccharomyces cerevisiae (strain ATCC 204508 / S288c) (Baker's yeast).